A 306-amino-acid polypeptide reads, in one-letter code: D-alanine--D-alanine ligase (306 aa).

The ATP-grasp domain maps to 100-295 (KQIFRRAGLP…FGQLLERLME (196 aa)). 127-180 (RLPYPLFVKSNTGGSSLRLGRARNRAELDDIMGQIFAAGEEVIMEPVLPGREVT) provides a ligand contact to ATP. Residues aspartate 249, glutamate 262, and asparagine 264 each contribute to the Mg(2+) site.

It belongs to the D-alanine--D-alanine ligase family. The cofactor is Mg(2+). It depends on Mn(2+) as a cofactor.

The protein resides in the cytoplasm. It carries out the reaction 2 D-alanine + ATP = D-alanyl-D-alanine + ADP + phosphate + H(+). It functions in the pathway cell wall biogenesis; peptidoglycan biosynthesis. Cell wall formation. The polypeptide is D-alanine--D-alanine ligase (Desulfovibrio desulfuricans (strain ATCC 27774 / DSM 6949 / MB)).